Reading from the N-terminus, the 241-residue chain is Proteasome subunit alpha type-5 (241 aa).

It belongs to the peptidase T1A family. In terms of assembly, the 26S proteasome consists of a 20S proteasome core and two 19S regulatory subunits. The 20S proteasome core is composed of 28 subunits that are arranged in four stacked rings, resulting in a barrel-shaped structure. The two end rings are each formed by seven alpha subunits, and the two central rings are each formed by seven beta subunits. The catalytic chamber with the active sites is on the inside of the barrel.

It is found in the cytoplasm. It localises to the nucleus. Functionally, the proteasome is a multicatalytic proteinase complex which is characterized by its ability to cleave peptides with Arg, Phe, Tyr, Leu, and Glu adjacent to the leaving group at neutral or slightly basic pH. The proteasome has an ATP-dependent proteolytic activity. The sequence is that of Proteasome subunit alpha type-5 (psmA5) from Dictyostelium discoideum (Social amoeba).